Consider the following 810-residue polypeptide: RING finger protein unkempt homolog (810 aa).

Positions 1-24 are disordered; it reads MSKGPGPGGSAASSAPPAATAQVL. Over residues 10–19 the composition is skewed to low complexity; that stretch reads SAASSAPPAA. C3H1-type zinc fingers lie at residues 84–113, 124–154, 215–241, 251–285, and 293–321; these read YSPD…HRTT, YYKT…HGPH, NYKT…HNSK, KYRS…HTRT, and IYKS…HVEQ. The disordered stretch occupies residues 239 to 265; it reads NSKDRRRSPRKHKYRSSPCPNVKHGDE. At Ser-240 the chain carries Phosphoserine. The segment covering 241-253 has biased composition (basic residues); it reads KDRRRSPRKHKYR. Residues 324 to 343 are disordered; the sequence is LSDDLQPSSAVSSPTQPGPV. The segment covering 328–338 has biased composition (polar residues); that stretch reads LQPSSAVSSPT. Residues Ser-374, Ser-378, Ser-385, and Ser-631 each carry the phosphoserine modification. A coiled-coil region spans residues 643–723; it reads GAAELARLRQ…QEELERLHAG (81 aa). The RING-type; degenerate zinc finger occupies 766–801; that stretch reads SVKCLKCQEQKRAVLPCQHAALCELCAEGSECPICQ.

This sequence belongs to the unkempt family.

It is found in the cytoplasm. Functionally, sequence-specific RNA-binding protein which plays an important role in the establishment and maintenance of the early morphology of cortical neurons during embryonic development. Acts as a translation repressor and controls a translationally regulated cell morphology program to ensure proper structuring of the nervous system. Translational control depends on recognition of its binding element within target mRNAs which consists of a mandatory UAG trimer upstream of a U/A-rich motif. Associated with polysomes. The protein is RING finger protein unkempt homolog (UNK) of Homo sapiens (Human).